The sequence spans 33 residues: Photosystem II reaction center protein T (33 aa).

Residues 3-23 form a helical membrane-spanning segment; that stretch reads ALVYTFLLVSTLGILFFSIFF.

This sequence belongs to the PsbT family. In terms of assembly, PSII is composed of 1 copy each of membrane proteins PsbA, PsbB, PsbC, PsbD, PsbE, PsbF, PsbH, PsbI, PsbJ, PsbK, PsbL, PsbM, PsbT, PsbY, PsbZ, Psb30/Ycf12, at least 3 peripheral proteins of the oxygen-evolving complex and a large number of cofactors. It forms dimeric complexes.

It is found in the plastid. The protein resides in the chloroplast thylakoid membrane. Functionally, found at the monomer-monomer interface of the photosystem II (PS II) dimer, plays a role in assembly and dimerization of PSII. PSII is a light-driven water plastoquinone oxidoreductase, using light energy to abstract electrons from H(2)O, generating a proton gradient subsequently used for ATP formation. The polypeptide is Photosystem II reaction center protein T (Pelargonium hortorum (Common geranium)).